The following is a 437-amino-acid chain: uncharacterized protein (437 aa).

This is an uncharacterized protein from Rhodococcus erythropolis (Arthrobacter picolinophilus).